The primary structure comprises 104 residues: Iron-sulfur cluster assembly protein CyaY (104 aa).

This sequence belongs to the frataxin family.

In terms of biological role, involved in iron-sulfur (Fe-S) cluster assembly. May act as a regulator of Fe-S biogenesis. This is Iron-sulfur cluster assembly protein CyaY from Aliivibrio fischeri (strain ATCC 700601 / ES114) (Vibrio fischeri).